Consider the following 428-residue polypeptide: GTPase Obg (428 aa).

Residues 1–158 (MFIDTAKIFV…RWVALELKLL (158 aa)) form the Obg domain. Residues 159 to 331 (ADVGLLGFPN…VIKEAARMLK (173 aa)) form the OBG-type G domain. GTP contacts are provided by residues 165 to 172 (GFPNVGKS), 190 to 194 (FTTLK), 212 to 215 (DVPG), 282 to 285 (NKCD), and 312 to 314 (SAA). Mg(2+) is bound by residues S172 and T192. One can recognise an OCT domain in the interval 345–428 (RFIPEDKKFT…LNDFEFEYLL (84 aa)).

The protein belongs to the TRAFAC class OBG-HflX-like GTPase superfamily. OBG GTPase family. In terms of assembly, monomer. Mg(2+) serves as cofactor.

The protein localises to the cytoplasm. Functionally, an essential GTPase which binds GTP, GDP and possibly (p)ppGpp with moderate affinity, with high nucleotide exchange rates and a fairly low GTP hydrolysis rate. Plays a role in control of the cell cycle, stress response, ribosome biogenesis and in those bacteria that undergo differentiation, in morphogenesis control. The sequence is that of GTPase Obg from Clostridium perfringens (strain ATCC 13124 / DSM 756 / JCM 1290 / NCIMB 6125 / NCTC 8237 / Type A).